The sequence spans 801 residues: Protein 4.1 (801 aa).

The segment at 1–187 is disordered; sequence MTTEKGLLAE…GESKASHKVV (187 aa). Positions 45 to 58 are enriched in low complexity; sequence EQSQESPSTTSPST. The segment covering 88-107 has biased composition (basic and acidic residues); it reads SDEKEVELLGEKGQDQKDVD. Residues 108-117 show a composition bias toward acidic residues; sequence EGLGEQLEDD. Residues 141 to 151 show a composition bias toward polar residues; that stretch reads SLSSAETQPAQ. The segment covering 154–166 has biased composition (acidic residues); it reads QKEDQDPEADCED. A compositionally biased stretch (basic and acidic residues) spans 167–182; that stretch reads VEGKEPIKKPEGESKA. The FERM domain occupies 193 to 474; sequence MRCKVTLLDD…EHHTFFRLTS (282 aa). Residues 477–587 form a hydrophilic region; it reads SIPKHRFLSL…GMPNQRESPK (111 aa). Residues 516–613 form a disordered region; it reads RTGSKRASRS…DKVKDLEKTQ (98 aa). A compositionally biased stretch (basic and acidic residues) spans 563–577; it reads RVEEMPKKTEEKPKE. The tract at residues 588-651 is spectrin--actin-binding; sequence DVKATQQDSP…WDKRLSTHSP (64 aa). Positions 591–601 are enriched in polar residues; it reads ATQQDSPSPTV. Positions 604–613 are enriched in basic and acidic residues; that stretch reads DKVKDLEKTQ. The C-terminal (CTD) stretch occupies residues 653 to 801; sequence RTLSFNGQVQ…GVVHQETEIA (149 aa).

As to quaternary structure, binds with a high affinity to glycophorin and with lower affinity to band III protein. Associates with the nuclear mitotic apparatus. Binds calmodulin. In terms of processing, phosphorylated at multiple sites by different protein kinases and each phosphorylation event selectively modulates the protein's functions. In terms of tissue distribution, found exclusively in photoreceptors following the terminal mitosis of retinal neurons. When retinal synaptogenesis is complete, protein 4.1 is also expressed in the inner retina. In adult amphibian retinas, protein 4.1 is detected in photoreceptors, bipolar cells, and ganglion cell axons.

Its subcellular location is the nucleus. It is found in the cytoplasm. The protein resides in the cytoskeleton. The protein localises to the cell cortex. Protein 4.1 is a major structural element of the erythrocyte membrane skeleton. It plays a key role in regulating membrane physical properties of mechanical stability and deformability by stabilizing spectrin-actin interaction. May be required for dynein-dynactin complex and NUMA1 recruitment at the mitotic cell cortex during anaphase. In Xenopus laevis (African clawed frog), this protein is Protein 4.1.